The following is a 969-amino-acid chain: RNA polymerase-associated protein RapA (969 aa).

Residues 162–339 enclose the Helicase ATP-binding domain; that stretch reads EVGQRVAPRV…FARLALLDAD (178 aa). 175–182 serves as a coordination point for ATP; that stretch reads DEVGLGKT. The DEAH box motif lies at 285–288; sequence DEAH. In terms of domain architecture, Helicase C-terminal spans 492-663; sequence RIEWLITFLK…IFLKNPQAVG (172 aa).

This sequence belongs to the SNF2/RAD54 helicase family. RapA subfamily. Interacts with the RNAP. Has a higher affinity for the core RNAP than for the holoenzyme. Its ATPase activity is stimulated by binding to RNAP.

In terms of biological role, transcription regulator that activates transcription by stimulating RNA polymerase (RNAP) recycling in case of stress conditions such as supercoiled DNA or high salt concentrations. Probably acts by releasing the RNAP, when it is trapped or immobilized on tightly supercoiled DNA. Does not activate transcription on linear DNA. Probably not involved in DNA repair. This Actinobacillus pleuropneumoniae serotype 3 (strain JL03) protein is RNA polymerase-associated protein RapA.